We begin with the raw amino-acid sequence, 355 residues long: MGCTVSAEDKAAAERSKMIDKNLREDGEKAAREVKLLLLGAGESGKSTIVKQMKIIHEDGYSEEECRQYRAVVYSNTIQSIMAIVKAMGNLQIDFADPQRADDARQLFALSCAAEEQGMLPEDLSGVIRRLWADHGVQACFGRSREYQLNDSAAYYLNDLERIAQSDYIPTQQDVLRTRVKTTGIVETHFTFKDLHFKMFDVGGQRSERKKWIHCFEGVTAIIFCVALSAYDLVLAEDEEMNRMHESMKLFDSICNNKWFTDTSIILFLNKKDLFEEKITQSPLTICFPEYTGANKYDEAASYIQSKFEDLNKRKDTKEIYTHFTCATDTKNVQFVFDAVTDVIIKNNLKDCGLF.

The N-myristoyl glycine moiety is linked to residue Gly2. Cys3 carries S-palmitoyl cysteine lipidation. The G-alpha domain maps to 32–355; the sequence is REVKLLLLGA…KNNLKDCGLF (324 aa). Residues 35 to 48 form a G1 motif region; that stretch reads KLLLLGAGESGKST. Residues 40-47, 176-182, 201-205, 270-273, and Ala327 each bind GTP; these read GAGESGKS, LRTRVKT, DVGGQ, and NKKD. Positions 47 and 182 each coordinate Mg(2+). The segment at 174 to 182 is G2 motif; it reads DVLRTRVKT. Residues 197 to 206 form a G3 motif region; sequence FKMFDVGGQR. Positions 266–273 are G4 motif; sequence ILFLNKKD. The segment at 325–330 is G5 motif; the sequence is TCATDT.

Belongs to the G-alpha family. G(i/o/t/z) subfamily. As to quaternary structure, g proteins are composed of 3 units; alpha, beta and gamma. The alpha chain contains the guanine nucleotide binding site. In this context, interacts with GNB2. Interacts with UNC5B. Interacts with GPSM1. Interacts with RGS12 and RGS14. Interacts (inactive GDP-bound form) with NUCB1 (via GBA motif); the interaction leads to activation of GNAI3. Interacts (inactive GDP-bound form) with CCDC88C/DAPLE (via GBA motif). Interacts (inactive GDP-bound form) with CCDC8A/GIV (via GBA motif).

It is found in the cytoplasm. It localises to the cell membrane. The protein localises to the cytoskeleton. Its subcellular location is the microtubule organizing center. The protein resides in the centrosome. It is found in the membrane. Guanine nucleotide-binding proteins (G proteins) are involved as modulators or transducers in various transmembrane signaling systems. The G(i) proteins are involved in hormonal regulation of adenylate cyclase: they inhibit the cyclase in response to beta-adrenergic stimuli. May play a role in cell division. The sequence is that of Guanine nucleotide-binding protein G(i) subunit alpha-2 (Gnai2) from Rattus norvegicus (Rat).